Reading from the N-terminus, the 358-residue chain is 3-dehydroquinate synthase (358 aa).

NAD(+)-binding positions include 70-75 (DGEQYK), 104-108 (GVIGD), 128-129 (TT), K141, K150, and 168-171 (CLHT). 3 residues coordinate Zn(2+): E183, H246, and H263.

This sequence belongs to the sugar phosphate cyclases superfamily. Dehydroquinate synthase family. Co(2+) is required as a cofactor. The cofactor is Zn(2+). It depends on NAD(+) as a cofactor.

It localises to the cytoplasm. The enzyme catalyses 7-phospho-2-dehydro-3-deoxy-D-arabino-heptonate = 3-dehydroquinate + phosphate. It participates in metabolic intermediate biosynthesis; chorismate biosynthesis; chorismate from D-erythrose 4-phosphate and phosphoenolpyruvate: step 2/7. Catalyzes the conversion of 3-deoxy-D-arabino-heptulosonate 7-phosphate (DAHP) to dehydroquinate (DHQ). This Shewanella loihica (strain ATCC BAA-1088 / PV-4) protein is 3-dehydroquinate synthase.